Here is a 439-residue protein sequence, read N- to C-terminus: 5-hydroxybenzimidazole synthase (439 aa).

Substrate contacts are provided by residues methionine 96, tyrosine 125, histidine 164, 187–189 (SKG), 228–231 (NGIR), and glutamate 267. Histidine 271 is a Zn(2+) binding site. Tyrosine 294 contacts substrate. Histidine 335 provides a ligand contact to Zn(2+). 3 residues coordinate [4Fe-4S] cluster: cysteine 410, cysteine 413, and cysteine 417.

This sequence belongs to the ThiC family. 5-hydroxybenzimidazole synthase subfamily. As to quaternary structure, homodimer. [4Fe-4S] cluster is required as a cofactor.

The enzyme catalyses 5-amino-1-(5-phospho-beta-D-ribosyl)imidazole + AH2 + S-adenosyl-L-methionine = 5-hydroxybenzimidazole + 5'-deoxyadenosine + formate + L-methionine + A + NH4(+) + phosphate + 2 H(+). In terms of biological role, catalyzes the conversion of aminoimidazole ribotide (AIR) to 5-hydroxybenzimidazole (5-HBI) in a radical S-adenosyl-L-methionine (SAM)-dependent reaction. Is thus involved in the anaerobic biosynthesis of the benzimidazole lower axial ligand of the cobamide produced by D.autotrophicum. This chain is 5-hydroxybenzimidazole synthase, found in Desulforapulum autotrophicum (strain ATCC 43914 / DSM 3382 / VKM B-1955 / HRM2) (Desulfobacterium autotrophicum).